The following is a 291-amino-acid chain: Tyrosine recombinase XerD (291 aa).

Residues 1-82 form the Core-binding (CB) domain; sequence MEEGLIDRLL…ACKRLYIWME (82 aa). In terms of domain architecture, Tyr recombinase spans 103 to 285; sequence NIPTLITEQQ…ANVWLQGVVK (183 aa). Residues Arg-143, Lys-167, His-237, Arg-240, and His-263 contribute to the active site. The O-(3'-phospho-DNA)-tyrosine intermediate role is filled by Tyr-272.

It belongs to the 'phage' integrase family. XerD subfamily. In terms of assembly, forms a cyclic heterotetrameric complex composed of two molecules of XerC and two molecules of XerD.

It is found in the cytoplasm. Site-specific tyrosine recombinase, which acts by catalyzing the cutting and rejoining of the recombining DNA molecules. The XerC-XerD complex is essential to convert dimers of the bacterial chromosome into monomers to permit their segregation at cell division. It also contributes to the segregational stability of plasmids. The protein is Tyrosine recombinase XerD of Neisseria meningitidis serogroup B (strain ATCC BAA-335 / MC58).